The sequence spans 431 residues: Tol-Pal system protein TolB (431 aa).

A signal peptide spans M1–A18. A disordered region spans residues L410–Q431.

This sequence belongs to the TolB family. The Tol-Pal system is composed of five core proteins: the inner membrane proteins TolA, TolQ and TolR, the periplasmic protein TolB and the outer membrane protein Pal. They form a network linking the inner and outer membranes and the peptidoglycan layer.

Its subcellular location is the periplasm. Part of the Tol-Pal system, which plays a role in outer membrane invagination during cell division and is important for maintaining outer membrane integrity. This is Tol-Pal system protein TolB from Myxococcus xanthus.